Here is a 484-residue protein sequence, read N- to C-terminus: tRNA sulfurtransferase (484 aa).

Residues 63-167 (QGIRDRLSCM…DQRLFVVHDQ (105 aa)) form the THUMP domain. Residues 185 to 186 (LM), lysine 267, glycine 289, and glutamine 298 contribute to the ATP site. Cysteine 346 and cysteine 457 are oxidised to a cystine. The Rhodanese domain occupies 405–483 (ALAGQVIIDI…GHANVRVYRP (79 aa)). Cysteine 457 (cysteine persulfide intermediate) is an active-site residue.

It belongs to the ThiI family.

The protein localises to the cytoplasm. It catalyses the reaction [ThiI sulfur-carrier protein]-S-sulfanyl-L-cysteine + a uridine in tRNA + 2 reduced [2Fe-2S]-[ferredoxin] + ATP + H(+) = [ThiI sulfur-carrier protein]-L-cysteine + a 4-thiouridine in tRNA + 2 oxidized [2Fe-2S]-[ferredoxin] + AMP + diphosphate. The enzyme catalyses [ThiS sulfur-carrier protein]-C-terminal Gly-Gly-AMP + S-sulfanyl-L-cysteinyl-[cysteine desulfurase] + AH2 = [ThiS sulfur-carrier protein]-C-terminal-Gly-aminoethanethioate + L-cysteinyl-[cysteine desulfurase] + A + AMP + 2 H(+). The protein operates within cofactor biosynthesis; thiamine diphosphate biosynthesis. In terms of biological role, catalyzes the ATP-dependent transfer of a sulfur to tRNA to produce 4-thiouridine in position 8 of tRNAs, which functions as a near-UV photosensor. Also catalyzes the transfer of sulfur to the sulfur carrier protein ThiS, forming ThiS-thiocarboxylate. This is a step in the synthesis of thiazole, in the thiamine biosynthesis pathway. The sulfur is donated as persulfide by IscS. The sequence is that of tRNA sulfurtransferase from Pseudomonas syringae pv. tomato (strain ATCC BAA-871 / DC3000).